The following is a 98-amino-acid chain: NADH-ubiquinone oxidoreductase chain 4L (98 aa).

A run of 3 helical transmembrane segments spans residues 1–21 (MMSINLNLIMAFSLALAGVLI), 28–48 (STLLCLEGMMLSLFILMALLI), and 59–79 (APLVLLVFSACEAGVGLALLV).

Belongs to the complex I subunit 4L family. In terms of assembly, core subunit of respiratory chain NADH dehydrogenase (Complex I) which is composed of 45 different subunits.

The protein localises to the mitochondrion inner membrane. The catalysed reaction is a ubiquinone + NADH + 5 H(+)(in) = a ubiquinol + NAD(+) + 4 H(+)(out). In terms of biological role, core subunit of the mitochondrial membrane respiratory chain NADH dehydrogenase (Complex I) which catalyzes electron transfer from NADH through the respiratory chain, using ubiquinone as an electron acceptor. Part of the enzyme membrane arm which is embedded in the lipid bilayer and involved in proton translocation. This is NADH-ubiquinone oxidoreductase chain 4L (MT-ND4L) from Pseudocheirus peregrinus (Common ring-tailed possum).